Here is a 371-residue protein sequence, read N- to C-terminus: tRNA-specific 2-thiouridylase MnmA (371 aa).

ATP-binding positions include 7–14 (AMSGGVDS) and Leu-33. Residue Cys-101 is the Nucleophile of the active site. Residues Cys-101 and Cys-213 are joined by a disulfide bond. An ATP-binding site is contributed by Gly-125. The interval 163-165 (KDQ) is interaction with tRNA. The Cysteine persulfide intermediate role is filled by Cys-213.

Belongs to the MnmA/TRMU family.

The protein localises to the cytoplasm. The catalysed reaction is S-sulfanyl-L-cysteinyl-[protein] + uridine(34) in tRNA + AH2 + ATP = 2-thiouridine(34) in tRNA + L-cysteinyl-[protein] + A + AMP + diphosphate + H(+). Its function is as follows. Catalyzes the 2-thiolation of uridine at the wobble position (U34) of tRNA, leading to the formation of s(2)U34. This Roseiflexus castenholzii (strain DSM 13941 / HLO8) protein is tRNA-specific 2-thiouridylase MnmA.